The chain runs to 293 residues: Nucleotide-binding protein Dole_0503 (293 aa).

Residue 11–18 (GLSGSGKS) participates in ATP binding. 62-65 (DLRE) is a binding site for GTP.

The protein belongs to the RapZ-like family.

Functionally, displays ATPase and GTPase activities. The chain is Nucleotide-binding protein Dole_0503 from Desulfosudis oleivorans (strain DSM 6200 / JCM 39069 / Hxd3) (Desulfococcus oleovorans).